A 350-amino-acid chain; its full sequence is tRNA uridine(34) hydroxylase (350 aa).

The 95-residue stretch at 146–240 folds into the Rhodanese domain; it reads DDPDAVFIDM…YARRAREQGL (95 aa). The active-site Cysteine persulfide intermediate is Cys-200. Residues 319-328 are compositionally biased toward basic and acidic residues; that stretch reads RRRRAGRENG. Residues 319–350 form a disordered region; that stretch reads RRRRAGRENGNKIFNKSRGRLNSKLSIPDPAE.

It belongs to the TrhO family.

The catalysed reaction is uridine(34) in tRNA + AH2 + O2 = 5-hydroxyuridine(34) in tRNA + A + H2O. Catalyzes oxygen-dependent 5-hydroxyuridine (ho5U) modification at position 34 in tRNAs. This is tRNA uridine(34) hydroxylase from Salmonella dublin (strain CT_02021853).